The chain runs to 590 residues: Nuclear receptor subfamily 2 group C member 1 (590 aa).

A required for interaction with KAT2B region spans residues 1 to 166 (MATIEEIAHQ…RLQRCIAFGM (166 aa)). Residues 98–173 (FDLCVVCGDK…FGMKQDSVQC (76 aa)) constitute a DNA-binding region (nuclear receptor). NR C4-type zinc fingers lie at residues 101 to 121 (CVVCGDKASGRHYGAITCEGC) and 137 to 156 (CRGSKDCIINKHHRNRCQYC). Phosphoserine is present on residues S185 and S203. The residue at position 208 (T208) is a Phosphothreonine. A Phosphothreonine; by MAPK1 modification is found at T210. Residue K238 forms a Glycyl lysine isopeptide (Lys-Gly) (interchain with G-Cter in SUMO); alternate linkage. Residue K238 forms a Glycyl lysine isopeptide (Lys-Gly) (interchain with G-Cter in SUMO2); alternate linkage. In terms of domain architecture, NR LBD spans 333 to 577 (ESMEGSTHLI…SVIPHILKME (245 aa)). Position 568 is a phosphoserine; by PKC (S568). A required for interaction with NRIP1 region spans residues 571–590 (PHILKMEPADYNSQIIGHSL). Residue K575 forms a Glycyl lysine isopeptide (Lys-Gly) (interchain with G-Cter in SUMO2) linkage.

This sequence belongs to the nuclear hormone receptor family. NR2 subfamily. In terms of assembly, homodimer. Heterodimer; with NR2C2 which is required for chromatin remodeling and for binding to promoter regions such as globin DR1 repeats. Interacts with ESR1; the interaction prevents homodimerization of ESR1 and suppresses its transcriptional activity and cell growth. Interacts with NRIP1 (via its LXXLL motifs); the interaction provides corepressor activity. Interacts with HDAC3 (via the DNA-binding domain); the interaction recruits phosphorylated NR2C1 to PML bodies for sumoylation. Interacts with HDAC4 (via the DNA-binding domain). Interacts with PIAS1; the interaction is required for sumoylation of NR2C1. Interacts with UBE2I; the interaction is required for sumoylation of NR2C1. Interacts with KAT2B; the interaction acts as a corepressor of gene expression. In terms of processing, sumoylation requires both PIAS1 and UBE2I. Sumoylation appears to dissociate NR2C1 from the PML nuclear bodies. Enhances the interaction with NRIP1 but inhibits interaction with KAT2B. In proliferating cells, stimulation by all-trans retinoic acid, activation of MAPK1-mediated phosphorylation and recruitment to PML bodies with subsequent sumoylation, suppresses OCT4 expression. Phosphorylated on several serine and threonine residues. Phosphorylation on Thr-210, stimulated by all-trans retinoic acid (atRA) mediates PML location and sumoylation in proliferating cells which then modulates its association with effector molecules, KAT2B and NRIP1. Phosphorylation on Ser-568 by PKC is important for protein stability and function as activator of RARB.

It localises to the nucleus. The protein resides in the PML body. Functionally, orphan nuclear receptor. Binds the IR7 element in the promoter of its own gene in an autoregulatory negative feedback mechanism. Primarily repressor of a broad range of genes including ESR1 and RARB. Together with NR2C2, forms the core of the DRED (direct repeat erythroid-definitive) complex that represses embryonic and fetal globin transcription. Binds to hormone response elements (HREs) consisting of two 5'-AGGTCA-3' half site direct repeat consensus sequences. Also activator of OCT4 gene expression. Plays a fundamental role in early embryogenesis and regulates embryonic stem cell proliferation and differentiation. Mediator of retinoic acid-regulated preadipocyte proliferation. In Rattus norvegicus (Rat), this protein is Nuclear receptor subfamily 2 group C member 1 (Nr2c1).